The sequence spans 102 residues: Antimicrobial peptide 1 (102 aa).

The signal sequence occupies residues 1-26; the sequence is MASTKLFFSVITVMMLIAMASEMVNG. Intrachain disulfides connect cysteine 37/cysteine 90, cysteine 47/cysteine 102, and cysteine 49/cysteine 75.

It localises to the secreted. Its function is as follows. Antimicrobial peptide which inhibits the growth of a variety of fungi, oomycetes, Gram-positive bacterial phytopatogenes and S.cerevisiae in vitro. No activity against E.coli. This chain is Antimicrobial peptide 1, found in Macadamia integrifolia (Macadamia nut).